Reading from the N-terminus, the 487-residue chain is MQFAFDNSFHADMQGFYAPAEAAKPSAPRLLAFNDALAERLGFDRRGVDADELARVFSGEELPEGAAPIALAYAGHQFGHFSPQLGDGRALLLGEIVAPDGARFDIQLKGSGPTAFSRGGDGKAAIGPVLREFLVSEAMAAMGVPTTRALAAVTTGERVERERAHPGAVLTRVASSHIRVGTFQFFAAHFGADHVVQLSDYSIARHFPDLADAANPHLALLDRVIGLQCALIARWLGVGFIHGVMNTDNVAISGETIDYGPCAFMDRFAANTVFSSIDATGRYAYGRQPQIMHWNMARFAEALLPAIHRVSPADVEAAKALVDAIPGRFRAAWHAQVREKLGLSTSAGDDAELIDRLFDELEKHSVDFTTFFRALAMLLRGEGAMMQALLPAPDAMAPWIADWWQRIEQDAANPLDLADAMDAVNPLYIPRNHRVEAALEAAEAGDPAPWLELLEVVRQPFAARAGRERFAEPAPADAAPYTTFCGT.

Residues G86, G88, R89, K109, D121, G122, R172, and R179 each coordinate ATP. The Proton acceptor role is filled by D248. Mg(2+) contacts are provided by N249 and D258. ATP is bound at residue D258.

The protein belongs to the SELO family. Mg(2+) serves as cofactor. The cofactor is Mn(2+).

The catalysed reaction is L-seryl-[protein] + ATP = 3-O-(5'-adenylyl)-L-seryl-[protein] + diphosphate. The enzyme catalyses L-threonyl-[protein] + ATP = 3-O-(5'-adenylyl)-L-threonyl-[protein] + diphosphate. It carries out the reaction L-tyrosyl-[protein] + ATP = O-(5'-adenylyl)-L-tyrosyl-[protein] + diphosphate. It catalyses the reaction L-histidyl-[protein] + UTP = N(tele)-(5'-uridylyl)-L-histidyl-[protein] + diphosphate. The catalysed reaction is L-seryl-[protein] + UTP = O-(5'-uridylyl)-L-seryl-[protein] + diphosphate. The enzyme catalyses L-tyrosyl-[protein] + UTP = O-(5'-uridylyl)-L-tyrosyl-[protein] + diphosphate. In terms of biological role, nucleotidyltransferase involved in the post-translational modification of proteins. It can catalyze the addition of adenosine monophosphate (AMP) or uridine monophosphate (UMP) to a protein, resulting in modifications known as AMPylation and UMPylation. This Sphingopyxis alaskensis (strain DSM 13593 / LMG 18877 / RB2256) (Sphingomonas alaskensis) protein is Protein nucleotidyltransferase YdiU.